A 552-amino-acid polypeptide reads, in one-letter code: Putative transport protein HSM_0534 (552 aa).

Transmembrane regions (helical) follow at residues 4-24 (IAITICILALVAVIGLWIGHW), 28-48 (GVGLGIGGVLFGGIIVAHFMN), 67-87 (LILFVYTIGIQVGPGFFASLL), 95-115 (GLATLIVVLGAVSVFVLYKVV), and 157-177 (MAYAMAYPFGICGILLSMWLI). RCK C-terminal domains follow at residues 190–275 (KQFQ…VIGE) and 277–360 (IDMP…IIGN). 6 helical membrane-spanning segments follow: residues 370 to 390 (MLPVFIGIGLGVLLGSIPFYI), 402 to 424 (AGGPLVVALILARIGSVGKLYWF), 438 to 458 (IVLFLAVVGLKSGGGFVDTLV), 463 to 483 (LEWMGYGMFITFIPLMITGII), 495 to 515 (LCGLLAGSMTDPPALAFANAI), and 529 to 549 (VYPLSMFLRIMSPQLLAILLW).

Belongs to the AAE transporter (TC 2.A.81) family. YidE subfamily.

The protein localises to the cell membrane. The polypeptide is Putative transport protein HSM_0534 (Histophilus somni (strain 2336) (Haemophilus somnus)).